Here is a 476-residue protein sequence, read N- to C-terminus: Xylan O-acetyltransferase 4 (476 aa).

A disordered region spans residues 1–37 (MTKPQQQSPPSTTATTTTSPPPPPPSTPPPASSSSSS). At 1–63 (MTKPQQQSPP…SLLSALRRSP (63 aa)) the chain is on the cytoplasmic side. The span at 8 to 18 (SPPSTTATTTT) shows a compositional bias: low complexity. The segment covering 19–31 (SPPPPPPSTPPPA) has biased composition (pro residues). The helical; Signal-anchor for type II membrane protein transmembrane segment at 64-80 (VTTLVAAFFLLALFMYG) threads the bilayer. The Lumenal segment spans residues 81 to 476 (EDVRTLAELS…PSPHPPLPPQ (396 aa)). N103, N128, and N167 each carry an N-linked (GlcNAc...) asparagine glycan. 4 disulfides stabilise this stretch: C117–C168, C139–C204, C148–C444, and C360–C440. A GDS motif motif is present at residues 191–193 (GDS). The active-site Nucleophile is the S193. Residues N299 and N369 are each glycosylated (N-linked (GlcNAc...) asparagine). Residue D439 is the Proton donor of the active site. The DXXH motif signature appears at 439 to 442 (DCIH). The active-site Proton acceptor is H442.

Belongs to the PC-esterase family. TBL subfamily. In terms of tissue distribution, highly expressed in leaves. Expressed in roots, stems and inflorescences.

The protein resides in the golgi apparatus membrane. Its function is as follows. Xylan acetyltransferase required for 2-O- and 3-O-monoacetylation of xylosyl residues in xylan. Catalyzes the 2-O-acetylation of xylan, followed by nonenzymatic acetyl migration to the O-3 position, resulting in products that are monoacetylated at both O-2 and O-3 positions. The sequence is that of Xylan O-acetyltransferase 4 from Oryza sativa subsp. japonica (Rice).